The sequence spans 405 residues: Alpha-1-antiproteinase S (405 aa).

A signal peptide spans 1–24 (MPSAIPRGLLLLAGLCCLVFGIMA). N-linked (GlcNAc...) asparagine glycosylation is found at Asn57, Asn94, Asn157, and Asn258. The tract at residues 360 to 379 (GATMMEFMPMSLPEDLSFNK) is RCL.

It belongs to the serpin family.

It localises to the secreted. Inhibits elastase, chymotrypsin, cathepsin G, plasmin, and trypsin. The sequence is that of Alpha-1-antiproteinase S from Cavia porcellus (Guinea pig).